Consider the following 308-residue polypeptide: S-crystallin SL18 (308 aa).

The GST N-terminal domain maps to P2–G80. Residues E165–G205 form a disordered region. Over residues Q178 to C191 the composition is skewed to polar residues. The GST C-terminal domain occupies E185–F308.

The protein belongs to the GST superfamily. Lens.

Its function is as follows. S-crystallins are structural components of squids and octopi eye lens. Contains relatively little if any GST activity. This chain is S-crystallin SL18, found in Nototodarus sloanii (Wellington flying squid).